The primary structure comprises 201 residues: Beta-lactamase inhibitory protein (201 aa).

Positions 1 to 36 (MRTVGIGAGVRRLGRAVVMAAAVGGLVLGSAGASNA) are cleaved as a signal peptide. A run of 2 repeats spans residues 37–112 (AGVM…EKLL) and 116–201 (APTL…WDLV). 2 cysteine pairs are disulfide-bonded: C66/C78 and C145/C167.

As to quaternary structure, interacts with E.coli beta-lactamase TEM-1; interaction inhibits hydrolysis of beta-lactam antibiotics. Interacts with K.pneumoniae beta-lactamase SHV-1. Interacts with K.pneumoniae beta-lactamases KPC-2 and KPC-3; interaction inhibits hydrolysis of beta-lactam antibiotics. Interacts with E.coli beta-lactamases CTX-M-14 and CTX-M-15; interaction inhibits hydrolysis of beta-lactam antibiotics.

It is found in the secreted. Functionally, inhibits a wide variety of beta lactamases. The protein is Beta-lactamase inhibitory protein of Streptomyces clavuligerus.